We begin with the raw amino-acid sequence, 212 residues long: MVCGGFTCSKNALCALNVVYMLVGLLLIGVAAWGKGFGIVSSIHIIGGVIAIGVFLLLIAIIGLIGAVSHHQVMLFIYMVVLILVFIFQFIVSCSCLAMNRSQQEYFLNTTWRRMSNETRLNLEETLECCGFLNTTEARELFNKDVALCSHVCPDPHKCLSCGDKMLNHADEALKILGGVGLFFSFTEILGVWLAFRFRNQKDPRANPSAFL.

The Cytoplasmic portion of the chain corresponds to 1-12 (MVCGGFTCSKNA). A helical transmembrane segment spans residues 13–33 (LCALNVVYMLVGLLLIGVAAW). Over 34-44 (GKGFGIVSSIH) the chain is Extracellular. Residues 45-65 (IIGGVIAIGVFLLLIAIIGLI) form a helical membrane-spanning segment. At 66-72 (GAVSHHQ) the chain is on the cytoplasmic side. A helical membrane pass occupies residues 73-93 (VMLFIYMVVLILVFIFQFIVS). The Extracellular portion of the chain corresponds to 94–175 (CSCLAMNRSQ…MLNHADEALK (82 aa)). 4 N-linked (GlcNAc...) asparagine glycosylation sites follow: Asn100, Asn109, Asn117, and Asn134. A helical transmembrane segment spans residues 176-196 (ILGGVGLFFSFTEILGVWLAF). Topologically, residues 197 to 212 (RFRNQKDPRANPSAFL) are cytoplasmic.

Belongs to the tetraspanin (TM4SF) family.

The protein localises to the membrane. This is Tetraspanin-31-A (tspan31-a) from Xenopus laevis (African clawed frog).